We begin with the raw amino-acid sequence, 302 residues long: MDSSGGAYLNVDAIWSKVGFVRLLQMLFGCTTFSLVLHRAGFSAAYGTFCVFVWAFCFALTILIVTCELTRLQSCLRSISWGNFTAAYAMLATLMTLTAAVIYPMYFTSLNCSSSDCSTKYFRLAVSVCAALLFVTYAVEVFLTRAKPGQPCSYMATASGLLKVVQAFVACVIFGALASESQYKKFVATQWCVAVYSFCFGVTMVVVILNITGRALSLCCPFERFVVIYTVLAILMYISAAVIWPVYFFDSKYGSAKRPSRCTWGQCPWDSQLAVTIFTHINLILYIADLIYTQRLRIVAQR.

2 consecutive MARVEL domains span residues 13–149 (AIWS…AKPG) and 154–298 (YMAT…RLRI). 7 helical membrane-spanning segments follow: residues 45–65 (AYGT…ILIV), 87–107 (AYAM…PMYF), 124–144 (LAVS…VFLT), 158–178 (ASGL…GALA), 191–211 (WCVA…ILNI), 225–245 (FVVI…VIWP), and 273–293 (LAVT…LIYT).

The protein belongs to the MAL family.

It localises to the membrane. The sequence is that of Myeloid-associated differentiation marker-like protein 2 (myadml2) from Xenopus laevis (African clawed frog).